The chain runs to 249 residues: 1-(5-phosphoribosyl)-5-[(5-phosphoribosylamino)methylideneamino] imidazole-4-carboxamide isomerase (249 aa).

The Proton acceptor role is filled by Asp11. Asp132 acts as the Proton donor in catalysis.

Belongs to the HisA/HisF family.

The protein resides in the cytoplasm. It catalyses the reaction 1-(5-phospho-beta-D-ribosyl)-5-[(5-phospho-beta-D-ribosylamino)methylideneamino]imidazole-4-carboxamide = 5-[(5-phospho-1-deoxy-D-ribulos-1-ylimino)methylamino]-1-(5-phospho-beta-D-ribosyl)imidazole-4-carboxamide. It participates in amino-acid biosynthesis; L-histidine biosynthesis; L-histidine from 5-phospho-alpha-D-ribose 1-diphosphate: step 4/9. The sequence is that of 1-(5-phosphoribosyl)-5-[(5-phosphoribosylamino)methylideneamino] imidazole-4-carboxamide isomerase from Nitrobacter winogradskyi (strain ATCC 25391 / DSM 10237 / CIP 104748 / NCIMB 11846 / Nb-255).